The chain runs to 216 residues: Ribonuclease HII (216 aa).

An RNase H type-2 domain is found at 28–216; sequence DIVCGVDEAG…PVRAALDLIR (189 aa). The a divalent metal cation site is built by aspartate 34, glutamate 35, and aspartate 126.

It belongs to the RNase HII family. Mn(2+) serves as cofactor. Requires Mg(2+) as cofactor.

It localises to the cytoplasm. The catalysed reaction is Endonucleolytic cleavage to 5'-phosphomonoester.. In terms of biological role, endonuclease that specifically degrades the RNA of RNA-DNA hybrids. The chain is Ribonuclease HII from Burkholderia vietnamiensis (strain G4 / LMG 22486) (Burkholderia cepacia (strain R1808)).